The primary structure comprises 366 residues: Galactose-1-phosphate uridylyltransferase (366 aa).

Serine 27 carries the post-translational modification Phosphoserine. Zn(2+) is bound by residues cysteine 54 and cysteine 57. Residues alanine 63 and 79 to 80 (ND) each bind UDP-alpha-D-glucose. Residue histidine 124 coordinates Zn(2+). Asparagine 169 contacts UDP-alpha-D-glucose. Residue histidine 180 participates in Zn(2+) binding. Histidine 182 acts as the Tele-UMP-histidine intermediate in catalysis. Glutamine 184 lines the UDP-alpha-D-glucose pocket. The Fe cation site is built by glutamate 198, histidine 297, histidine 314, and histidine 316. UDP-alpha-D-glucose is bound by residues 329-332 (KFLV) and 334-335 (FE).

The protein belongs to the galactose-1-phosphate uridylyltransferase type 1 family. As to quaternary structure, homodimer. It depends on Zn(2+) as a cofactor.

It carries out the reaction alpha-D-galactose 1-phosphate + UDP-alpha-D-glucose = alpha-D-glucose 1-phosphate + UDP-alpha-D-galactose. Its pathway is carbohydrate metabolism; galactose metabolism. In Saccharomyces cerevisiae (strain ATCC 204508 / S288c) (Baker's yeast), this protein is Galactose-1-phosphate uridylyltransferase (GAL7).